The following is a 265-amino-acid chain: uncharacterized protein (265 aa).

Disordered regions lie at residues 21-53 and 78-133; these read TLTH…LGPH and HAPS…SSVS. The segment covering 90–101 has biased composition (acidic residues); sequence DDDDDDEDDDDS. Low complexity predominate over residues 114-123; it reads SSSSSSSPRV. 137–144 lines the ATP pocket; it reads AILHQGKS.

This is an uncharacterized protein from Saccharomyces cerevisiae (strain ATCC 204508 / S288c) (Baker's yeast).